The primary structure comprises 129 residues: Class I hydrophobin 11 (129 aa).

Residues 1–19 form the signal peptide; that stretch reads MRLTPLLAALALPLLTVLA. 4 disulfide bridges follow: C48–C106, C55–C100, C56–C89, and C107–C122.

Belongs to the fungal hydrophobin family. In terms of assembly, self-assembles to form functional amyloid fibrils called rodlets. Self-assembly into fibrillar rodlets occurs spontaneously at hydrophobic:hydrophilic interfaces and the rodlets further associate laterally to form amphipathic monolayers.

The protein localises to the secreted. It is found in the cell wall. Functionally, aerial growth, conidiation, and dispersal of filamentous fungi in the environment rely upon a capability of their secreting small amphipathic proteins called hydrophobins (HPBs) with low sequence identity. Class I can self-assemble into an outermost layer of rodlet bundles on aerial cell surfaces, conferring cellular hydrophobicity that supports fungal growth, development and dispersal; whereas Class II form highly ordered films at water-air interfaces through intermolecular interactions but contribute nothing to the rodlet structure. In Pleurotus ostreatus (strain PC15) (Oyster mushroom), this protein is Class I hydrophobin 11.